A 367-amino-acid polypeptide reads, in one-letter code: Glutamate 5-kinase (367 aa).

Lys17 lines the ATP pocket. Residues Ser57, Asp144, and Asn156 each coordinate substrate. Residues 176 to 177 (SD) and 217 to 223 (TGGMTSK) contribute to the ATP site. In terms of domain architecture, PUA spans 279–357 (AGALTLDEGA…SELPGELRRP (79 aa)).

It belongs to the glutamate 5-kinase family.

It is found in the cytoplasm. The catalysed reaction is L-glutamate + ATP = L-glutamyl 5-phosphate + ADP. It functions in the pathway amino-acid biosynthesis; L-proline biosynthesis; L-glutamate 5-semialdehyde from L-glutamate: step 1/2. Its function is as follows. Catalyzes the transfer of a phosphate group to glutamate to form L-glutamate 5-phosphate. The chain is Glutamate 5-kinase from Mycolicibacterium paratuberculosis (strain ATCC BAA-968 / K-10) (Mycobacterium paratuberculosis).